Here is a 569-residue protein sequence, read N- to C-terminus: 4-hydroxy-7-methoxy-3-oxo-3,4-dihydro-2H-1,4-benzoxazin-2-yl glucoside beta-D-glucosidase 1b, chloroplastic (569 aa).

A chloroplast-targeting transit peptide spans methionine 1 to alanine 50. A beta-D-glucoside is bound by residues glutamine 92, histidine 194, and asparagine 239 to glutamate 240. Glutamate 240 (proton donor) is an active-site residue. Cysteine 259 and cysteine 265 are disulfide-bonded. Residues tyrosine 383, glutamate 456, tryptophan 504, glutamate 511–tryptophan 512, and phenylalanine 520 contribute to the a beta-D-glucoside site. Glutamate 456 serves as the catalytic Nucleophile.

The protein belongs to the glycosyl hydrolase 1 family. In terms of assembly, homo- and heterohexamers. Expressed in young seedlings early after germination.

The protein resides in the plastid. It localises to the chloroplast. The enzyme catalyses Hydrolysis of terminal, non-reducing beta-D-glucosyl residues with release of beta-D-glucose.. It carries out the reaction DIMBOA beta-D-glucoside + H2O = DIMBOA + D-glucose. The catalysed reaction is DIBOA beta-D-glucoside + H2O = DIBOA + D-glucose. In terms of biological role, acts in defense of young plant parts against pests via the production of hydroxamic acids from hydroxamic acid glucosides. Enzymatic activity is highly correlated with plant growth. The preferred substrate is DIMBOA-beta-D-glucoside. The sequence is that of 4-hydroxy-7-methoxy-3-oxo-3,4-dihydro-2H-1,4-benzoxazin-2-yl glucoside beta-D-glucosidase 1b, chloroplastic (GLU1B) from Triticum aestivum (Wheat).